The primary structure comprises 353 residues: Photosystem II protein D1 (353 aa).

N-acetylthreonine is present on T2. T2 carries the post-translational modification Phosphothreonine. 3 consecutive transmembrane segments (helical) span residues Y29–S46, H118–L133, and W142–A156. H118 is a chlorophyll a binding site. Y126 contributes to the pheophytin a binding site. The [CaMn4O5] cluster site is built by D170 and E189. A helical transmembrane segment spans residues F197 to L218. Residue H198 participates in chlorophyll a binding. A quinone is bound by residues H215 and S264 to F265. H215 contributes to the Fe cation binding site. H272 serves as a coordination point for Fe cation. The helical transmembrane segment at F274 to L288 threads the bilayer. Residues H332, E333, D342, and A344 each contribute to the [CaMn4O5] cluster site. A propeptide spanning residues A345–G353 is cleaved from the precursor.

It belongs to the reaction center PufL/M/PsbA/D family. In terms of assembly, PSII is composed of 1 copy each of membrane proteins PsbA, PsbB, PsbC, PsbD, PsbE, PsbF, PsbH, PsbI, PsbJ, PsbK, PsbL, PsbM, PsbT, PsbX, PsbY, PsbZ, Psb30/Ycf12, at least 3 peripheral proteins of the oxygen-evolving complex and a large number of cofactors. It forms dimeric complexes. Requires The D1/D2 heterodimer binds P680, chlorophylls that are the primary electron donor of PSII, and subsequent electron acceptors. It shares a non-heme iron and each subunit binds pheophytin, quinone, additional chlorophylls, carotenoids and lipids. D1 provides most of the ligands for the Mn4-Ca-O5 cluster of the oxygen-evolving complex (OEC). There is also a Cl(-1) ion associated with D1 and D2, which is required for oxygen evolution. The PSII complex binds additional chlorophylls, carotenoids and specific lipids. as cofactor. In terms of processing, tyr-161 forms a radical intermediate that is referred to as redox-active TyrZ, YZ or Y-Z. Post-translationally, C-terminally processed by CTPA; processing is essential to allow assembly of the oxygen-evolving complex and thus photosynthetic growth.

It localises to the plastid. It is found in the chloroplast thylakoid membrane. The catalysed reaction is 2 a plastoquinone + 4 hnu + 2 H2O = 2 a plastoquinol + O2. Photosystem II (PSII) is a light-driven water:plastoquinone oxidoreductase that uses light energy to abstract electrons from H(2)O, generating O(2) and a proton gradient subsequently used for ATP formation. It consists of a core antenna complex that captures photons, and an electron transfer chain that converts photonic excitation into a charge separation. The D1/D2 (PsbA/PsbD) reaction center heterodimer binds P680, the primary electron donor of PSII as well as several subsequent electron acceptors. This is Photosystem II protein D1 from Vigna unguiculata (Cowpea).